A 437-amino-acid chain; its full sequence is Na(+)/H(+) antiporter NhaA (437 aa).

Helical transmembrane passes span Ser12–Ala32, Leu65–Leu85, Ala103–Val123, Gly133–Gly153, Ile162–Phe182, His186–Gly206, Ile214–Ser234, Gly308–Ser328, Val333–Ile353, Ile377–Leu397, and Leu412–Val432.

Belongs to the NhaA Na(+)/H(+) (TC 2.A.33) antiporter family.

It localises to the cell inner membrane. It catalyses the reaction Na(+)(in) + 2 H(+)(out) = Na(+)(out) + 2 H(+)(in). Its function is as follows. Na(+)/H(+) antiporter that extrudes sodium in exchange for external protons. This chain is Na(+)/H(+) antiporter NhaA, found in Bacteroides fragilis (strain YCH46).